A 461-amino-acid chain; its full sequence is Protein-serine O-palmitoleoyltransferase porcupine (461 aa).

The Cytoplasmic portion of the chain corresponds to 1 to 17 (MATFSRQEFFQQLLQGC). A helical membrane pass occupies residues 18–38 (LLPTAQQGLDQIWLLLAICLA). Residues 39–66 (CRLLWRLGLPSYLKHASTVAGGFFSLYH) lie on the Extracellular side of the membrane. The helical transmembrane segment at 67-87 (FFQLHMVWVVLLSLLCYLVLF) threads the bilayer. The Cytoplasmic portion of the chain corresponds to 88–95 (LCRHSSHR). Residues 96–116 (GVFLSVTILIYLLMGEMHMVD) traverse the membrane as a helical segment. At 117-152 (TVTWHKMRGAQMIVAMKAVSLGFDLDRGEVGTVPSP) the chain is on the extracellular side. The chain crosses the membrane as a helical span at residues 153–173 (VEFMGYLYFVGTIVFGPWISF). The Cytoplasmic portion of the chain corresponds to 174-198 (HSYLQAVQGRPLSCRWLQKVARSLA). The S-palmitoyl cysteine moiety is linked to residue Cys-187. The chain crosses the membrane as a helical span at residues 199 to 219 (LALLCLVLSTCVGPYLFPYFI). Topologically, residues 220–252 (PLNGDRLLRNKKRKARGTMVRWLRAYESAVSFH) are extracellular. The chain crosses the membrane as a helical span at residues 253-273 (FSNYFVGFLSEATATLAGAGF). The Cytoplasmic portion of the chain corresponds to 274 to 337 (TEEKDHLEWD…SAVLVTYAAS (64 aa)). The chain crosses the membrane as a helical span at residues 338–358 (ALLHGFSFHLAAVLLSLAFIT). His-341 is an active-site residue. The Extracellular segment spans residues 359–396 (YVEHVLRKRLARILSACVLSKRCPPDCSHQHRLGLGVR). Residues 397–417 (ALNLLFGALAIFHLAYLGSLF) traverse the membrane as a helical segment. Residues 418-461 (DVDVDDTTEEQGYGMAYTVHKWSELSWASHWVTFGCWIFYRLIG) lie on the Cytoplasmic side of the membrane.

It belongs to the membrane-bound acyltransferase family. Porcupine subfamily. In terms of assembly, interacts with WNT1, WNT3, WNT3A, WNT4, WNT5A, WNT5B, WNT6, WNT7A and WNT7B. As to expression, isoform 1 is expressed in fetal brain, brain, amygdala, caudate nucleus, cerebellum, hippocampus, pituitary, thalamus, heart, skeletal muscle and testis. Isoform 4 is expressed in amygdala, corpus callosum, hippocampus, spinal cord, kidney, liver, lung, spleen, uterus, testis. Isoform 2 and isoform 3 are expressed in substantia negra, spinal cord, heart and lung.

The protein resides in the endoplasmic reticulum membrane. The catalysed reaction is [Wnt protein]-L-serine + (9Z)-hexadecenoyl-CoA = [Wnt protein]-O-(9Z)-hexadecenoyl-L-serine + CoA. In terms of biological role, protein-serine O-palmitoleoyltransferase that acts as a key regulator of the Wnt signaling pathway by mediating the attachment of palmitoleate, a 16-carbon monounsaturated fatty acid (C16:1(9Z)), to Wnt proteins. Serine palmitoleoylation of WNT proteins is required for efficient binding to frizzled receptors. The polypeptide is Protein-serine O-palmitoleoyltransferase porcupine (Homo sapiens (Human)).